The following is a 40-amino-acid chain: U12-ctenitoxin-Co1a (40 aa).

Intrachain disulfides connect cysteine 2–cysteine 16, cysteine 9–cysteine 22, cysteine 15–cysteine 31, and cysteine 24–cysteine 29.

As to expression, expressed by the venom gland.

It is found in the secreted. Functionally, insecticidal neurotoxin that reversibly inhibits the N-methyl-D-aspartate (NMDA)-subtype of ionotropic glutamate receptor (GRIN) and inhibits inactivation of insect sodium channels (Nav). In vivo, is highly toxic to insects. The polypeptide is U12-ctenitoxin-Co1a (Ctenus ornatus (Brazilian spider)).